Consider the following 254-residue polypeptide: Caffeoyl-CoA O-methyltransferase (254 aa).

Residues 1–25 (MATTNVEENKQTQEQQPKEIKHQEV) are disordered. The segment covering 7-25 (EENKQTQEQQPKEIKHQEV) has biased composition (basic and acidic residues). Lys-28 is a substrate binding site. S-adenosyl-L-methionine is bound by residues Thr-70, Glu-92, 94-95 (GV), Ser-100, Asp-118, and Ala-147. Residue Asp-170 participates in substrate binding. Residue Asp-170 coordinates a divalent metal cation. Asp-172 provides a ligand contact to S-adenosyl-L-methionine. A divalent metal cation contacts are provided by Asp-196 and Asn-197. Asn-201 lines the substrate pocket.

Belongs to the class I-like SAM-binding methyltransferase superfamily. Cation-dependent O-methyltransferase family. CCoAMT subfamily. A divalent metal cation serves as cofactor.

The enzyme catalyses (E)-caffeoyl-CoA + S-adenosyl-L-methionine = (E)-feruloyl-CoA + S-adenosyl-L-homocysteine + H(+). The protein operates within aromatic compound metabolism; phenylpropanoid biosynthesis. Methylates caffeoyl-CoA to feruloyl-CoA and 5-hydroxyferuloyl-CoA to sinapoyl-CoA. Plays a role in the synthesis of feruloylated polysaccharides. Involved in the reinforcement of the plant cell wall. Also involved in the responding to wounding or pathogen challenge by the increased formation of cell wall-bound ferulic acid polymers. This Mesembryanthemum crystallinum (Common ice plant) protein is Caffeoyl-CoA O-methyltransferase.